We begin with the raw amino-acid sequence, 769 residues long: Integrin beta-8 (769 aa).

The signal sequence occupies residues methionine 1–glycine 42. Residues glutamate 43–arginine 684 are Extracellular-facing. A PSI domain is found at arginine 46–serine 95. 25 disulfides stabilise this stretch: cysteine 47–cysteine 65, cysteine 55–cysteine 469, cysteine 58–cysteine 83, cysteine 68–cysteine 94, cysteine 211–cysteine 218, cysteine 266–cysteine 307, cysteine 407–cysteine 419, cysteine 439–cysteine 467, cysteine 471–cysteine 491, cysteine 471–cysteine 494, cysteine 481–cysteine 494, cysteine 499–cysteine 528, cysteine 511–cysteine 526, cysteine 520–cysteine 531, cysteine 533–cysteine 546, cysteine 553–cysteine 567, cysteine 561–cysteine 572, cysteine 574–cysteine 583, cysteine 585–cysteine 609, cysteine 593–cysteine 607, cysteine 601–cysteine 612, cysteine 614–cysteine 624, cysteine 627–cysteine 630, cysteine 634–cysteine 661, and cysteine 640–cysteine 657. The 239-residue stretch at proline 146 to leucine 384 folds into the VWFA domain. The Mg(2+) site is built by aspartate 154 and serine 156. A Ca(2+)-binding site is contributed by aspartate 193. Asparagine 233 carries an N-linked (GlcNAc...) asparagine glycan. Asparagine 249, aspartate 251, proline 253, and glutamate 254 together coordinate Ca(2+). Mg(2+) is bound at residue glutamate 254. Asparagine 402 is a glycosylation site (N-linked (GlcNAc...) asparagine). Asparagine 421, asparagine 431, asparagine 456, and asparagine 466 each carry an N-linked (GlcNAc...) asparagine glycan. 4 consecutive I-EGF domains span residues cysteine 471–aspartate 495, cysteine 499–glutamate 547, lysine 548–glutamine 584, and cysteine 585–glutamate 625. Asparagine 648 carries N-linked (GlcNAc...) asparagine glycosylation. The helical transmembrane segment at isoleucine 685–isoleucine 704 threads the bilayer. At arginine 705–phenylalanine 769 the chain is on the cytoplasmic side.

This sequence belongs to the integrin beta chain family. Heterodimer of an alpha and a beta subunit. Beta-8 (ITGB8) associates with alpha-V (ITGAV) to form ITGAV:ITGB8. ITGAV:ITGB8 interacts with TGFB1. In terms of tissue distribution, placenta, kidney, brain, ovary, uterus and in several transformed cells. Transiently expressed in 293 human embryonic kidney cells.

The protein resides in the cell membrane. In terms of biological role, integrin alpha-V:beta-8 (ITGAV:ITGB8) is a receptor for fibronectin. It recognizes the sequence R-G-D in its ligands. Integrin alpha-V:beta-6 (ITGAV:ITGB6) mediates R-G-D-dependent release of transforming growth factor beta-1 (TGF-beta-1) from regulatory Latency-associated peptide (LAP), thereby playing a key role in TGF-beta-1 activation on the surface of activated regulatory T-cells (Tregs). Required during vasculogenesis. This chain is Integrin beta-8, found in Homo sapiens (Human).